Reading from the N-terminus, the 69-residue chain is ATP synthase F(0) complex subunit e, mitochondrial (69 aa).

N6-acetyllysine is present on K34.

This sequence belongs to the ATPase e subunit family. In terms of assembly, component of the ATP synthase complex composed at least of ATP5F1A/subunit alpha, ATP5F1B/subunit beta, ATP5MC1/subunit c (homooctomer), MT-ATP6/subunit a, MT-ATP8/subunit 8, ATP5ME/subunit e, ATP5MF/subunit f, ATP5MG/subunit g, ATP5MK/subunit k, ATP5MJ/subunit j, ATP5F1C/subunit gamma, ATP5F1D/subunit delta, ATP5F1E/subunit epsilon, ATP5PF/subunit F6, ATP5PB/subunit b, ATP5PD/subunit d, ATP5PO/subunit OSCP. ATP synthase complex consists of a soluble F(1) head domain (subunits alpha(3) and beta(3)) - the catalytic core - and a membrane F(0) domain - the membrane proton channel (subunits c, a, 8, e, f, g, k and j). These two domains are linked by a central stalk (subunits gamma, delta, and epsilon) rotating inside the F1 region and a stationary peripheral stalk (subunits F6, b, d, and OSCP).

Its subcellular location is the mitochondrion. The protein resides in the mitochondrion inner membrane. Subunit e, of the mitochondrial membrane ATP synthase complex (F(1)F(0) ATP synthase or Complex V) that produces ATP from ADP in the presence of a proton gradient across the membrane which is generated by electron transport complexes of the respiratory chain. ATP synthase complex consist of a soluble F(1) head domain - the catalytic core - and a membrane F(1) domain - the membrane proton channel. These two domains are linked by a central stalk rotating inside the F(1) region and a stationary peripheral stalk. During catalysis, ATP synthesis in the catalytic domain of F(1) is coupled via a rotary mechanism of the central stalk subunits to proton translocation. In vivo, can only synthesize ATP although its ATP hydrolase activity can be activated artificially in vitro. Part of the complex F(0) domain. The chain is ATP synthase F(0) complex subunit e, mitochondrial from Cricetulus longicaudatus (Long-tailed dwarf hamster).